We begin with the raw amino-acid sequence, 514 residues long: ATP synthase subunit alpha (514 aa).

Residue 170-177 coordinates ATP; it reads GDRQIGKT.

This sequence belongs to the ATPase alpha/beta chains family. As to quaternary structure, F-type ATPases have 2 components, CF(1) - the catalytic core - and CF(0) - the membrane proton channel. CF(1) has five subunits: alpha(3), beta(3), gamma(1), delta(1), epsilon(1). CF(0) has three main subunits: a(1), b(2) and c(9-12). The alpha and beta chains form an alternating ring which encloses part of the gamma chain. CF(1) is attached to CF(0) by a central stalk formed by the gamma and epsilon chains, while a peripheral stalk is formed by the delta and b chains.

It is found in the cell inner membrane. The enzyme catalyses ATP + H2O + 4 H(+)(in) = ADP + phosphate + 5 H(+)(out). Produces ATP from ADP in the presence of a proton gradient across the membrane. The alpha chain is a regulatory subunit. This chain is ATP synthase subunit alpha, found in Marinobacter nauticus (strain ATCC 700491 / DSM 11845 / VT8) (Marinobacter aquaeolei).